The primary structure comprises 147 residues: Large ribosomal subunit protein uL15 (147 aa).

The segment at 1–57 (MDLSNLSPAPGSTKARKRLGRGPGSGNGTTAGRGNKGHNSRSGGGVRPGFEGGQMPL) is disordered. 2 stretches are compositionally biased toward gly residues: residues 21 to 31 (RGPGSGNGTTA) and 42 to 52 (SGGGVRPGFEG).

It belongs to the universal ribosomal protein uL15 family. As to quaternary structure, part of the 50S ribosomal subunit.

Binds to the 23S rRNA. In Desulfosudis oleivorans (strain DSM 6200 / JCM 39069 / Hxd3) (Desulfococcus oleovorans), this protein is Large ribosomal subunit protein uL15.